We begin with the raw amino-acid sequence, 376 residues long: Chaperone protein DnaJ (376 aa).

A J domain is found at 5–70 (DYYEVLGLSK…QKKANYDQFG (66 aa)). A CR-type zinc finger spans residues 133-215 (GVEKEISITR…CHGKGTVRKN (83 aa)). Zn(2+) contacts are provided by cysteine 146, cysteine 149, cysteine 163, cysteine 166, cysteine 189, cysteine 192, cysteine 203, and cysteine 206. CXXCXGXG motif repeat units lie at residues 146–153 (CDTCAGSG), 163–170 (CDKCGGTG), 189–196 (CDKCGGSG), and 203–210 (CTTCHGKG).

Belongs to the DnaJ family. In terms of assembly, homodimer. The cofactor is Zn(2+).

The protein localises to the cytoplasm. Functionally, participates actively in the response to hyperosmotic and heat shock by preventing the aggregation of stress-denatured proteins and by disaggregating proteins, also in an autonomous, DnaK-independent fashion. Unfolded proteins bind initially to DnaJ; upon interaction with the DnaJ-bound protein, DnaK hydrolyzes its bound ATP, resulting in the formation of a stable complex. GrpE releases ADP from DnaK; ATP binding to DnaK triggers the release of the substrate protein, thus completing the reaction cycle. Several rounds of ATP-dependent interactions between DnaJ, DnaK and GrpE are required for fully efficient folding. Also involved, together with DnaK and GrpE, in the DNA replication of plasmids through activation of initiation proteins. This chain is Chaperone protein DnaJ, found in Clostridium novyi (strain NT).